We begin with the raw amino-acid sequence, 148 residues long: Putative anti-anti-sigma factor Rv2638 (148 aa).

The STAS domain maps to 30-141; it reads LRATTDGSGA…PTVDTALGKG (112 aa).

It belongs to the anti-sigma-factor antagonist family. Interacts with unphosphorylated OprA.

This Mycobacterium tuberculosis (strain ATCC 25618 / H37Rv) protein is Putative anti-anti-sigma factor Rv2638.